A 126-amino-acid polypeptide reads, in one-letter code: Small ribosomal subunit protein uS13 (126 aa).

The tract at residues His92–Lys126 is disordered. Basic residues predominate over residues Gln101–Lys126.

This sequence belongs to the universal ribosomal protein uS13 family. As to quaternary structure, part of the 30S ribosomal subunit. Forms a loose heterodimer with protein S19. Forms two bridges to the 50S subunit in the 70S ribosome.

Its function is as follows. Located at the top of the head of the 30S subunit, it contacts several helices of the 16S rRNA. In the 70S ribosome it contacts the 23S rRNA (bridge B1a) and protein L5 of the 50S subunit (bridge B1b), connecting the 2 subunits; these bridges are implicated in subunit movement. Contacts the tRNAs in the A and P-sites. This chain is Small ribosomal subunit protein uS13, found in Nostoc punctiforme (strain ATCC 29133 / PCC 73102).